The primary structure comprises 454 residues: Butyrophilin-like protein 2 (454 aa).

At 1 to 6 the chain is on the cytoplasmic side; sequence MVDCPR. The helical; Signal-anchor for type II membrane protein transmembrane segment at 7–23 threads the bilayer; that stretch reads YSLSGVAASFLFVLLTI. The Extracellular segment spans residues 24–454; the sequence is KHPDDFRVVG…KTARFPLSGW (431 aa). 4 consecutive Ig-like V-type domains span residues 27 to 140, 148 to 234, 244 to 355, and 365 to 452; these read DDFR…VLLQ, PNIH…ATIA, ASVS…ARVD, and PRIT…FPLS. 4 disulfide bridges follow: Cys50-Cys124, Cys164-Cys218, Cys267-Cys341, and Cys381-Cys435. Asn210, Asn296, Asn427, and Asn432 each carry an N-linked (GlcNAc...) asparagine glycan.

Belongs to the immunoglobulin superfamily. BTN/MOG family. Highly expressed in intestine and at reduced levels in lung and stomach. Also expressed in thymus, spleen, lymph nodes, T-cells, B-cells, and macrophages.

Its subcellular location is the membrane. Its function is as follows. Negative regulator of T-cell proliferation. This chain is Butyrophilin-like protein 2, found in Mus musculus (Mouse).